We begin with the raw amino-acid sequence, 402 residues long: Type II NADH:quinone oxidoreductase (402 aa).

FAD-binding positions include 12–16 (GAGYA), 39–40 (NK), and valine 83. Glutamate 172 is a catalytic residue. Residues aspartate 302, 319-320 (AQ), and lysine 379 each bind FAD.

This sequence belongs to the NADH dehydrogenase family. FAD is required as a cofactor.

Its subcellular location is the cell membrane. The enzyme catalyses a quinone + NADH + H(+) = a quinol + NAD(+). Functionally, alternative, nonproton pumping NADH:quinone oxidoreductase that delivers electrons to the respiratory chain by oxidation of NADH and reduction of quinones, and contributes to the regeneration of NAD(+). This is Type II NADH:quinone oxidoreductase from Staphylococcus aureus (strain bovine RF122 / ET3-1).